The chain runs to 524 residues: Magnesium/proton exchanger 2 (524 aa).

Transmembrane regions (helical) follow at residues 28-48 (GVRA…LSAI), 88-108 (IADV…LATI), 125-145 (GTLV…CVVM), 157-177 (LGVW…LYII), 185-205 (VITL…LLHA), 325-345 (VIGI…AFIP), 349-369 (IAHG…IAYG), 377-397 (ISCV…AAGT), 430-450 (IYVG…LFVY), 462-482 (LSFS…VLVL), and 496-516 (MWAW…VVLS).

Belongs to the Ca(2+):cation antiporter (CaCA) (TC 2.A.19) family. MHX subfamily.

The protein localises to the vacuole membrane. Functionally, vacuolar transporter that exchanges protons with Mg(2+), Zn(2+) and Fe(2+) ions. May control the partitioning of Mg(2+) and Zn(2+) between plant organs. This is Magnesium/proton exchanger 2 (MHX2) from Oryza sativa subsp. japonica (Rice).